We begin with the raw amino-acid sequence, 2628 residues long: MMFPINVLLYKWLIFAVTFLWSCKILLRKLLGINITWINLFKLEICGLSLEDGTVRLKSVRFAVFERKLFIKGLRIDSKKSSTNDLHKELPREEERTFIETPEDNGGGFISKILSLSQYWLNGVTIILEDTQLVNNDITIEKFGFFLSIDNSKHIKSLRFDSFLRKLLWNGQTIIADAIFIVNTNLLIGEIMNPLKDGLQVGLDLKLGDLNIPMNLLNLFINKENVDLMSNEKLLQRLADTTKANEELKDEDIAKMKDDLVYAMEKFVDRIKPLKEMNVTVDKLQIKDFPLTNHPELLGMNKYISYNVLVSNINFNTNRFRNEMPGYTLIFEERDSPFKFSIIMARFNIYLNLNRKHQSHAKQLKIIEIPNVSIFGETNLFSQKFRLSNNLHAKELENAIFNIKGNISSLTIDMDPVNISFIKCFLSNIKVFTSSCPKNKILKENSHVKFLTRRRVLFDYFKCFLPLINMKFTLDDPKFVINDKDDLIIGKFSVFMISHHSKRYTLGNNLMEEKEETQHIFYESHWNVELLDMKLQHIIKHQKYEHTILRVDSIAIEEKVQLLPDILCSANADIDTLMLDLSELPTMVMLSELVHNLDSQLANVEENYFKEFYEKFASNLQNMKAECSNMAKCLRQKEILPSDFMFQQLPDFFDYIKINIRDISSTLGARSVFMPRDVFSSVDSQSSKDLIDGKLRKYCNTVEKLQIALFGDKTQWHNKIGSNHATMVRSGQLTNFSKDNKQNPNHKSSIADLDDISTSDATEVNHLWNINLLVNDITTSIIGETPEVSEELSTKTVSKVSNLSIKLFPDTESFSSNESDSKIILQINHSRGTSVVSLMSIFLAVSGIHTLNQIFGHCIHQKMRQSKTKQYFLALSESKKKSCIKSIKWGQLKELLEINFSSEYISQIIALPNGLRTKFEPTSTFITVKNCNTISVSGQYFRMMVESPTQPNFWERMICINGFKVMIHIDLLKQQMKKLNSLQNWEKLPSAITLENDSWHFSIPHHFEMFKIIDSIPTIFKSIKQMLYSLKTSKDDLIIFPHKIETPLSLPKIKLKSKRWLFSISDDPLEAELNTIFQIGLQEQRERLAKLQEFNKRISEDLIKSQKNAKEMKDDFEAIDNAILKHRTGLWAKDGKKRLRKSATDSEIPLTPAALNINGKRDDRPDRTQFISPEIENAYNTLLANFSDSWIKRVKEYKVKERREFDKNFSFLWGFIDYTKLPKDINKKVLPFSTNPFLMNLIIENIDIDIIRPSCGIENIPNFIHDVGKGVPKNTEYSIMIPMHLDAKFSEVRWHLRDYPLPFVSIPPLSSTQSKETIPMRIYGDFMITEDMLQSDRELRTLFVPLIPSVTVENTDRYYSLFVPRTMTSAKIFTDLNFEINSNHTTRVTWGGSYQPAIQQTMQCLDNFSKPPLDPSVKLGFWDKTRYLFHGKINIVWKKRGKFEISLKGAKSPYMLGGESAGFIVGFDGNVNLKCNEDNDPKKFLSCSADKVHFSIPNYFAKPLLVWSRPSTNTMFIPNQDDTNMQRYASFYYLLNTTSSKNEKADKEIMGKSFIEKTGIKLSGGMTLDMGILFERLGPSLNERTFESKKHYLTRLCNPIYVQDLSKHDSYAGFRSDFIHMSFGLSSNSNSAYNAMQLSPNGFKAFFVWWKSFSGNFPVRRGPLFGLQSISPKFGEHLYTISYHADVSPLFINYMYHNADADQILRKNYLEVAEFAGLKAKSSHFIMDLHQRKEVLTEYQAGLNVRRRVMKLKFLAGDVVCQDVDIRTVSGEFSKLNYIEEKEDAEYDIFDNDMSWLDITDFQDAFFINPDNYLPKIKIMPFAFSPQFAYQKRASYGDKYQVDPKTCKPITPFDNRVSHGCTLGHNVSLRTDLVEKRVTVLKKFREKLQEGIRKNKSAGVSEENLNDLLSKANSSVENAELLLKDFQKIFKQHEAGQTEQPFHFDSLNLLKNTKKTLKQFEHRFFIFNVLLKWNEDARSAIFKFFYYANLSNEFASLASGKGLREFEDVIKQREMTDDTTSMEAIPEGTDKANTTKQCHSCDDTEFTTENLLNIFEKNITQLSCDIKNKIHHKFFVQFITPQIQLTSLENPEACVLVSSPFFMLKTLEFDANTTSNTYMQDIFLKRHGILFGNANAFLFNKKDYQEFFELYFGSSSYGQDKKEQWPPWLGLELGFEPSALKKKAVVRNISALLHHQKLAPFSAKYDSLKDKIEDNICGYVPQVNVQVNSDEYLMLTKMALKLFLYVEPEDEELKKYIEKLIIGYDIYDTAQTRKFVNDLHDSEQILAVVEKELLFKRSLLDDIGKLDLSNIHNERMHQLLRLYILRKVFTSNGNNYINRTLVWNIKVNETILHLLDKIDKPFLDIAVAKLNFQRIQHTMGLRKNTVTVKMMQIFDLGENVNYHCILGPLITSSGNDTVGLASDVPLVQITWDVDKPVGGIKVVKNVETTLSSLTIKLEEDRLNKLFEWLSLKELIYDGNGDDDDGASSIFDMVSSESEEGKIEFSEDISSDFNEMLKRSSDYMIVEDLKLNSFKLCISYKGKGKMRLANVTNFVFNFPTLRLSNQTLRVTDLLLALKKVLIKVLIKHTGRFIGNKLKRNSKENKIADDTSPLKQLTTYNSYTEPEELR.

Residues 1–28 (MMFPINVLLYKWLIFAVTFLWSCKILLR) form the signal peptide. The interval 29–192 (KLLGINITWI…NTNLLIGEIM (164 aa)) is transmembrane domain. LRR repeat units follow at residues 160–182 (FDSF…IFIV), 213–236 (PMNL…KLLQ), 271–296 (IKPL…NHPE), 306–333 (YNVL…IFEE), 571–596 (NADI…LVHN), 835–857 (VVSL…IFGH), 1944–1967 (FDSL…FFIF), 2101–2125 (FFML…IFLK), and 2303–2327 (IGKL…ILRK).

Its subcellular location is the cell membrane. It is found in the endoplasmic reticulum membrane. It localises to the mitochondrion membrane. Its function is as follows. Tube-forming lipid transport protein which binds to phosphatidylinositols and affects phosphatidylinositol-4,5-bisphosphate (PtdIns-4,5-P2) distribution. This is Protein FMP27, mitochondrial from Saccharomyces cerevisiae (strain ATCC 204508 / S288c) (Baker's yeast).